A 726-amino-acid chain; its full sequence is Catalase-peroxidase (726 aa).

Positions 1-33 (MSTTDDTHNTLSTGKCPFHQGGHDRSAGAGTAS) are disordered. A cross-link (tryptophyl-tyrosyl-methioninium (Trp-Tyr) (with M-252)) is located at residues 105-226 (WHGAGTYRSI…LGATEMGLIY (122 aa)). His106 functions as the Proton acceptor in the catalytic mechanism. The tryptophyl-tyrosyl-methioninium (Tyr-Met) (with W-105) cross-link spans 226 to 252 (YVNPEGPDHSGEPLSAAAAIRATFGNM). His267 is a binding site for heme b.

It belongs to the peroxidase family. Peroxidase/catalase subfamily. Homodimer or homotetramer. It depends on heme b as a cofactor. Post-translationally, formation of the three residue Trp-Tyr-Met cross-link is important for the catalase, but not the peroxidase activity of the enzyme.

The enzyme catalyses H2O2 + AH2 = A + 2 H2O. The catalysed reaction is 2 H2O2 = O2 + 2 H2O. Its function is as follows. Bifunctional enzyme with both catalase and broad-spectrum peroxidase activity. The polypeptide is Catalase-peroxidase (Salmonella paratyphi B (strain ATCC BAA-1250 / SPB7)).